The following is a 159-amino-acid chain: Phosphopantetheine adenylyltransferase (159 aa).

Residue His16 participates in ATP binding. Substrate contacts are provided by Lys40, Met72, and Arg86. ATP-binding positions include 87-89, Glu97, and 122-128; these read GLR and YQYLSAS.

Belongs to the bacterial CoaD family. As to quaternary structure, homohexamer. Requires Mg(2+) as cofactor.

The protein resides in the cytoplasm. The catalysed reaction is (R)-4'-phosphopantetheine + ATP + H(+) = 3'-dephospho-CoA + diphosphate. It functions in the pathway cofactor biosynthesis; coenzyme A biosynthesis; CoA from (R)-pantothenate: step 4/5. Its function is as follows. Reversibly transfers an adenylyl group from ATP to 4'-phosphopantetheine, yielding dephospho-CoA (dPCoA) and pyrophosphate. The protein is Phosphopantetheine adenylyltransferase of Dehalococcoides mccartyi (strain CBDB1).